The chain runs to 485 residues: ATP synthase subunit beta (485 aa).

An ATP-binding site is contributed by 170–177 (GGAGVGKT).

The protein belongs to the ATPase alpha/beta chains family. As to quaternary structure, F-type ATPases have 2 components, CF(1) - the catalytic core - and CF(0) - the membrane proton channel. CF(1) has five subunits: alpha(3), beta(3), gamma(1), delta(1), epsilon(1). CF(0) has three main subunits: a(1), b(2) and c(9-12). The alpha and beta chains form an alternating ring which encloses part of the gamma chain. CF(1) is attached to CF(0) by a central stalk formed by the gamma and epsilon chains, while a peripheral stalk is formed by the delta and b chains.

It is found in the cell membrane. It carries out the reaction ATP + H2O + 4 H(+)(in) = ADP + phosphate + 5 H(+)(out). Produces ATP from ADP in the presence of a proton gradient across the membrane. The catalytic sites are hosted primarily by the beta subunits. The polypeptide is ATP synthase subunit beta (Salinispora arenicola (strain CNS-205)).